Reading from the N-terminus, the 740-residue chain is MQPPPRKVKVTQELKNIQVEQMTKLQAKHQAECDLLEDMRTFSQKKAAIEREYAQGMQKLASQYLKRDWPGVKADDRNDYRSMYPVWKSFLEGTMQVAQSRMNICENYKNFISEPARTVRSLKEQQLKRCVDQLTKIQTELQETVKDLAKGKKKYFETEQMAHAVREKADIEAKSKLSLFQSRISLQKASVKLKARRSECNSKATHARNDYLLTLAAANAHQDRYYQTDLVNIMKALDGNVYDHLKDYLIAFSRTELETCQAVQNTFQFLLENSSKVVRDYNLQLFLQENAVFHKPQPFQFQPCDSDTSRQLESETGTTEEHSLNKEARKWATRVAREHKNIVHQQRVLNDLECHGAAVSEQSRAELEQKIDEARENIRKAEIIKLKAEARLDLLKQIGVSVDTWLKSAMNQVMEELENERWARPPAVTSNGTLHSLNADTEREEGEEFEDNMDVFDDSSSSPSGTLRNYPLTCKVVYSYKASQPDELTIEEHEVLEVIEDGDMEDWVKARNKVGQVGYVPEKYLQFPTSNSLLSMLQSLAALDSRSHTSSNSTEAELVSGSLNGDASVCFVKALYDYEGQTDDELSFPEGAIIRILNKENQDDDGFWEGEFNGRIGVFPSVLVEELSASENGDTPWMREIQISPSPKPHASLPPLPLYDQPPSSPYPSPDKRSSLYFPRSPSANEKSLHAESPGFSQASRHTPETSYGKLRPVRAAPPPPTQNHRRPAEKIEDVEITLV.

In terms of domain architecture, F-BAR spans 8–282 (VKVTQELKNI…NSSKVVRDYN (275 aa)). Residues 303–323 (PCDSDTSRQLESETGTTEEHS) form a disordered region. Over residues 307-323 (DTSRQLESETGTTEEHS) the composition is skewed to basic and acidic residues. Residues 356–397 (GAAVSEQSRAELEQKIDEARENIRKAEIIKLKAEARLDLLKQ) are a coiled coil. 2 SH3 domains span residues 469–530 (NYPL…FPTS) and 567–629 (ASVC…ELSA). A required and sufficient for location at clathrin-coated pits region spans residues 567–629 (ASVCFVKALY…PSVLVEELSA (63 aa)). Residues 633–740 (GDTPWMREIQ…KIEDVEITLV (108 aa)) are disordered. Residues 646–657 (SPKPHASLPPLP) show a composition bias toward pro residues. Phosphoserine occurs at positions 675 and 681.

As to quaternary structure, homodimer. Interacts (via SH3 domain 2) with ITSN1 (via SH3 domain 4). Recruited to clathrin-coated pits during a mid-to-late stage of assembly via interaction with ITSN1. Interacts (via SH3 domain 1) with WASL. Interacts with WAS. Interacts with CASK and MAGI1. CASK inhibits interaction with MAGI1. In terms of processing, phosphorylated. Phosphorylation on a Ser residue is important for recruitment to the cell membrane and for its role in promoting endocytosis. As to expression, liver, brain, heart, placenta, skeletal muscle, pancreas, lung and kidney.

The protein resides in the cytoplasm. Its subcellular location is the cell junction. The protein localises to the membrane. It localises to the clathrin-coated pit. It is found in the cell membrane. The protein resides in the cell projection. Its subcellular location is the stereocilium. In terms of biological role, adapter protein that plays a role in endocytosis via clathrin-coated pits. Contributes to the internalization of cell surface receptors, such as integrin ITGB1 and transferrin receptor. Promotes endocytosis of EGFR in cancer cells, and thereby contributes to the down-regulation of EGFR signaling. Recruited to clathrin-coated pits during a mid-to-late stage of assembly, where it is required for normal progress from U-shaped intermediate stage pits to terminal, omega-shaped pits. Binds to membranes enriched in phosphatidylinositol 3,4-bisphosphate or phosphatidylinositol 3,4,5-trisphosphate. When bound to membranes, promotes actin polymerization via its interaction with WAS and/or WASL which leads to the activation of the Arp2/3 complex. Does not promote actin polymerisation in the absence of membranes. The protein is F-BAR and double SH3 domains protein 2 (FCHSD2) of Homo sapiens (Human).